The sequence spans 30 residues: Cytochrome c3, 50 kDa (30 aa).

In terms of assembly, monomer. In terms of processing, binds 4 heme groups per subunit.

It localises to the periplasm. In terms of biological role, participates in sulfate respiration coupled with phosphorylation by transferring electrons from the enzyme dehydrogenase to ferredoxin. The sequence is that of Cytochrome c3, 50 kDa from Desulfuromonas acetoxidans (Chloropseudomonas ethylica).